The primary structure comprises 733 residues: Arginine decarboxylase 1A, chloroplastic (733 aa).

The transit peptide at 1–44 (MPALGCCVDAAVSPPPGYSFLWDSSLPAPEIFPSGVPPSTNTAV) directs the protein to the chloroplast. An N6-(pyridoxal phosphate)lysine modification is found at Lys157. Pyridoxal 5'-phosphate-binding positions include Ser309, Gly346, and 395–398 (ESGR). 460-461 (YA) contacts substrate. Cys548 serves as the catalytic Proton donor; shared with dimeric partner. Asp549 contacts substrate. Tyr592 lines the pyridoxal 5'-phosphate pocket.

Belongs to the Orn/Lys/Arg decarboxylase class-II family. SpeA subfamily. As to quaternary structure, interacts, via its C-terminal internal region, with the tobacco mosaic virus (TMV) replicase helicase region. It depends on Mg(2+) as a cofactor. Pyridoxal 5'-phosphate serves as cofactor.

It localises to the plastid. The protein resides in the chloroplast. The enzyme catalyses L-arginine + H(+) = agmatine + CO2. Its pathway is alkaloid biosynthesis; nicotine biosynthesis. The protein operates within amine and polyamine biosynthesis; agmatine biosynthesis; agmatine from L-arginine: step 1/1. Its function is as follows. Involved in the biosynthesis of pyridine alkaloid natural products, leading mainly to the production of anabasine, anatabine, nicotine and nornicotine, effective deterrents against herbivores with antiparasitic and pesticide properties (neurotoxins); nornicotine serves as the precursor in the synthesis of the carcinogen compound N'-nitrosonornicotine (NNN). Required for the biosynthesis of putrescine. Catalyzes the first step of polyamine (PA) biosynthesis to produce putrescine from arginine. The polypeptide is Arginine decarboxylase 1A, chloroplastic (Nicotiana tabacum (Common tobacco)).